Consider the following 93-residue polypeptide: Protein FptB (93 aa).

Residues 1-25 form the signal peptide; that stretch reads MPRQSGFGWAWRVPLALAGSLAAAT. 2 consecutive transmembrane segments (helical) span residues 44-64 and 71-91; these read LYAG…GGLL and FAWR…LLAG.

Its subcellular location is the cell membrane. In terms of biological role, may play some role in transport of Fe(3+)-pyochelin. This chain is Protein FptB (fptB), found in Pseudomonas aeruginosa (strain ATCC 15692 / DSM 22644 / CIP 104116 / JCM 14847 / LMG 12228 / 1C / PRS 101 / PAO1).